Reading from the N-terminus, the 503-residue chain is ATP-dependent RNA helicase dbp3 (503 aa).

A compositionally biased stretch (basic and acidic residues) spans 1–13; that stretch reads MGKRVSHNEGADR. A disordered region spans residues 1 to 37; that stretch reads MGKRVSHNEGADRRPKKKAKNEKPEKETMESPAADVT. Positions 104-112 match the Q motif motif; sequence SFASPTPIQ. The Helicase ATP-binding domain maps to 116–292; sequence WPLLFAGRDV…ATFMTSAVTV (177 aa). Residue 129-136 coordinates ATP; the sequence is AETGSGKT. Residues 239 to 242 carry the DEAD box motif; the sequence is DEAD. In terms of domain architecture, Helicase C-terminal spans 323–472; it reads RLVQLLSENQ…EVPQELLKFG (150 aa).

This sequence belongs to the DEAD box helicase family. DDX5/DBP2 subfamily.

The protein resides in the nucleus. It is found in the nucleolus. The catalysed reaction is ATP + H2O = ADP + phosphate + H(+). Functionally, ATP-dependent RNA helicase required for 60S ribosomal subunit synthesis. Involved in efficient pre-rRNA processing, predominantly at site A3, which is necessary for the normal formation of 25S and 5.8S rRNAs. The chain is ATP-dependent RNA helicase dbp3 (dbp3) from Aspergillus clavatus (strain ATCC 1007 / CBS 513.65 / DSM 816 / NCTC 3887 / NRRL 1 / QM 1276 / 107).